We begin with the raw amino-acid sequence, 492 residues long: Catalase isozyme 2 (492 aa).

Residues 1–32 (MDPYKFRPSSSNDTPFWTTNAGDPVSNNNSSM) form a disordered region. Polar residues predominate over residues 8-32 (PSSSNDTPFWTTNAGDPVSNNNSSM). Residues His65 and Asn138 contribute to the active site. Tyr348 serves as a coordination point for heme.

This sequence belongs to the catalase family. As to quaternary structure, homotetramer. It depends on heme as a cofactor. As to expression, abundant in hypocotyls and roots. Low levels are seen in the endosperms and cotyledons.

It localises to the peroxisome. Its subcellular location is the glyoxysome. The catalysed reaction is 2 H2O2 = O2 + 2 H2O. Functionally, occurs in almost all aerobically respiring organisms and serves to protect cells from the toxic effects of hydrogen peroxide. The polypeptide is Catalase isozyme 2 (CAT2) (Ricinus communis (Castor bean)).